A 664-amino-acid chain; its full sequence is UvrABC system protein C (664 aa).

Residues 63-141 (LRPGVYRMYD…IKRYRPPYNI (79 aa)) enclose the GIY-YIG domain. The 36-residue stretch at 254-289 (THVQKKLVTAMEQASNDLNYELAAVYRDRLKALAFI) folds into the UVR domain.

It belongs to the UvrC family. Interacts with UvrB in an incision complex.

Its subcellular location is the cytoplasm. Functionally, the UvrABC repair system catalyzes the recognition and processing of DNA lesions. UvrC both incises the 5' and 3' sides of the lesion. The N-terminal half is responsible for the 3' incision and the C-terminal half is responsible for the 5' incision. This chain is UvrABC system protein C, found in Zymomonas mobilis subsp. mobilis (strain ATCC 31821 / ZM4 / CP4).